Consider the following 764-residue polypeptide: Ergosteryl-beta-glucosidase (764 aa).

Glutamate 515 functions as the Nucleophile in the catalytic mechanism. Residues 588–629 form a disordered region; the sequence is HDTRAKTPTPEPSPASTVASVSTSTSKSGSSQPPSFIKPDNH. Residue threonine 594 is modified to Phosphothreonine. The span at 601 to 622 shows a compositional bias: low complexity; it reads PASTVASVSTSTSKSGSSQPPS.

Belongs to the glycosyl hydrolase 5 (cellulase A) family.

Its subcellular location is the cytoplasm. The protein localises to the cytosol. It localises to the vacuole membrane. It catalyses the reaction ergosteryl 3-beta-D-glucoside + H2O = ergosterol + D-glucose. In terms of biological role, ergosteryl beta-glucosidase involved in the ergosteryl beta-glucoside (EG) catabolic pathway and vacuole formation via hydrolysis of EG to generate glucose. Is also able to hydrolyze cholesteryl beta-glucoside and sitosteryl beta-glucoside to generate glucose; and C6-7-nitro-2,1,3-benzoxadiazole (NBD)-GlcCer to generate C6-NBD-ceramide (Cer). The polypeptide is Ergosteryl-beta-glucosidase (Saccharomyces cerevisiae (strain ATCC 204508 / S288c) (Baker's yeast)).